An 86-amino-acid polypeptide reads, in one-letter code: Putative defensin-like protein 234 (86 aa).

The signal sequence occupies residues Met-1–Ala-26. Cystine bridges form between Cys-34–Cys-86, Cys-44–Cys-71, Cys-52–Cys-80, and Cys-69–Cys-82.

Belongs to the DEFL family.

Its subcellular location is the secreted. In Arabidopsis thaliana (Mouse-ear cress), this protein is Putative defensin-like protein 234 (SCRL14).